Consider the following 235-residue polypeptide: UPF0702 transmembrane protein YdfS (235 aa).

A run of 2 helical transmembrane segments spans residues 32 to 52 and 60 to 80; these read MTIF…GLAY and NMAI…FLSI.

This sequence belongs to the UPF0702 family.

It is found in the cell membrane. The polypeptide is UPF0702 transmembrane protein YdfS (ydfS) (Bacillus subtilis (strain 168)).